A 240-amino-acid polypeptide reads, in one-letter code: MSERLIVALDVSDKEKAMDIVEELKDVVSFFKVGMELFYREGPKLIDDLKNLGLKVFLDLKLHDIPNTVARALKNLIDLEVDMVNIHALGGKEMLRAAYLVKDEALKRKGKAPIILGVTVLTSMNQESLEQVGFKIKLSQLVAILAKETKEAGLDGVVASAQEVALIKSICGTEFITVTPGIRRFEDANFDQKRVLTPKKALELGADYLVVGRPIIAASNRRLAAQKYLEEMEGVLHGSL.

Substrate is bound by residues D10, K32, 59-68 (DLKLHDIPNT), T122, R183, Q192, G212, and R213. Residue K61 is the Proton donor of the active site.

It belongs to the OMP decarboxylase family. Type 1 subfamily. As to quaternary structure, homodimer.

It catalyses the reaction orotidine 5'-phosphate + H(+) = UMP + CO2. It functions in the pathway pyrimidine metabolism; UMP biosynthesis via de novo pathway; UMP from orotate: step 2/2. Functionally, catalyzes the decarboxylation of orotidine 5'-monophosphate (OMP) to uridine 5'-monophosphate (UMP). This is Orotidine 5'-phosphate decarboxylase from Carboxydothermus hydrogenoformans (strain ATCC BAA-161 / DSM 6008 / Z-2901).